A 359-amino-acid chain; its full sequence is Peptide methionine sulfoxide reductase MsrA/MsrB (359 aa).

The interval 36–189 is peptide methionine sulfoxide reductase A; sequence RVIYLAGGCF…PSGYCHIDLK (154 aa). The active site involves C44. Residues 206–329 enclose the MsrB domain; sequence DEVLKKKLTK…NSAALRFIPL (124 aa). Residue C318 is the Nucleophile of the active site.

It in the N-terminal section; belongs to the MsrA Met sulfoxide reductase family. In the C-terminal section; belongs to the MsrB Met sulfoxide reductase family.

It catalyses the reaction L-methionyl-[protein] + [thioredoxin]-disulfide + H2O = L-methionyl-(S)-S-oxide-[protein] + [thioredoxin]-dithiol. It carries out the reaction [thioredoxin]-disulfide + L-methionine + H2O = L-methionine (S)-S-oxide + [thioredoxin]-dithiol. The enzyme catalyses L-methionyl-[protein] + [thioredoxin]-disulfide + H2O = L-methionyl-(R)-S-oxide-[protein] + [thioredoxin]-dithiol. Its function is as follows. Has an important function as a repair enzyme for proteins that have been inactivated by oxidation. Catalyzes the reversible oxidation-reduction of methionine sulfoxide in proteins to methionine. This is Peptide methionine sulfoxide reductase MsrA/MsrB (msrAB) from Helicobacter pylori (strain ATCC 700392 / 26695) (Campylobacter pylori).